The chain runs to 72 residues: Protein kish-A (72 aa).

An N-terminal signal peptide occupies residues 1–26 (MSAIFNFQSLLIVILLLICTCAYLRA). The Extracellular segment spans residues 27-53 (LVPNLLDKNKTGILGIFWKCARIGERK). An N-linked (GlcNAc...) asparagine glycan is attached at asparagine 35. The helical transmembrane segment at 54-71 (SPYVAVCCVVMAFSILFM) threads the bilayer. Position 72 (glutamine 72) is a topological domain, cytoplasmic.

Belongs to the KISH family.

Its subcellular location is the golgi apparatus membrane. In terms of biological role, involved in the early part of the secretory pathway. The polypeptide is Protein kish-A (tmem167a) (Xenopus tropicalis (Western clawed frog)).